The sequence spans 415 residues: Histidine--tRNA ligase (415 aa).

This sequence belongs to the class-II aminoacyl-tRNA synthetase family. Homodimer.

Its subcellular location is the cytoplasm. It carries out the reaction tRNA(His) + L-histidine + ATP = L-histidyl-tRNA(His) + AMP + diphosphate + H(+). The chain is Histidine--tRNA ligase from Clostridium botulinum (strain Okra / Type B1).